The following is a 434-amino-acid chain: Methylenetetrahydrofolate--tRNA-(uracil-5-)-methyltransferase TrmFO (434 aa).

9-14 (GAGLAG) is a binding site for FAD.

This sequence belongs to the MnmG family. TrmFO subfamily. FAD is required as a cofactor.

The protein localises to the cytoplasm. It carries out the reaction uridine(54) in tRNA + (6R)-5,10-methylene-5,6,7,8-tetrahydrofolate + NADH + H(+) = 5-methyluridine(54) in tRNA + (6S)-5,6,7,8-tetrahydrofolate + NAD(+). The catalysed reaction is uridine(54) in tRNA + (6R)-5,10-methylene-5,6,7,8-tetrahydrofolate + NADPH + H(+) = 5-methyluridine(54) in tRNA + (6S)-5,6,7,8-tetrahydrofolate + NADP(+). In terms of biological role, catalyzes the folate-dependent formation of 5-methyl-uridine at position 54 (M-5-U54) in all tRNAs. In Bacillus pumilus (strain SAFR-032), this protein is Methylenetetrahydrofolate--tRNA-(uracil-5-)-methyltransferase TrmFO.